The primary structure comprises 258 residues: Snake venom serine proteinase 5 (258 aa).

Positions 1-18 (MVLIRVLANLLILQLSYA) are cleaved as a signal peptide. The propeptide occupies 19–24 (QKSSEL). Residues 25 to 249 (VVGGDECNIN…YNDWIQSIIA (225 aa)) form the Peptidase S1 domain. Disulfide bonds link C31-C163, C50-C66, C98-C256, C142-C210, C174-C189, and C200-C225. N-linked (GlcNAc...) asparagine glycosylation occurs at N44. Residues H65 and D110 each act as charge relay system in the active site. Residue S204 is the Charge relay system of the active site.

The protein belongs to the peptidase S1 family. Snake venom subfamily. As to quaternary structure, monomer. Expressed by the venom gland.

Its subcellular location is the secreted. Functionally, snake venom serine protease that may act in the hemostasis system of the prey. The polypeptide is Snake venom serine proteinase 5 (Crotalus adamanteus (Eastern diamondback rattlesnake)).